The sequence spans 230 residues: UPF0688 protein C1orf174 homolog (230 aa).

Disordered stretches follow at residues 1-85 and 97-166; these read MRSR…SLPK and AEDS…VRAS. A compositionally biased stretch (low complexity) spans 11 to 30; it reads RSSARLRARSYSSASLASAR. The span at 31 to 48 shows a compositional bias: polar residues; the sequence is DVTSSTSAKTTCLASSSH. A compositionally biased stretch (basic and acidic residues) spans 49-78; the sequence is KATDRRTSKKFKYDKGHLVKAELQKLDPKS. The residue at position 180 (Ser-180) is a Phosphoserine.

Belongs to the UPF0688 family.

It localises to the nucleus. This Mus musculus (Mouse) protein is UPF0688 protein C1orf174 homolog.